A 200-amino-acid polypeptide reads, in one-letter code: Superoxide dismutase [Mn], mitochondrial (200 aa).

Mn(2+) contacts are provided by His-27, His-72, Asp-157, and His-161.

It belongs to the iron/manganese superoxide dismutase family. It depends on Mn(2+) as a cofactor.

The protein localises to the mitochondrion matrix. The enzyme catalyses 2 superoxide + 2 H(+) = H2O2 + O2. Destroys superoxide anion radicals which are normally produced within the cells and which are toxic to biological systems. The chain is Superoxide dismutase [Mn], mitochondrial (sod) from Agaricus bisporus (White button mushroom).